The following is a 181-amino-acid chain: Protein AC41 (181 aa).

In terms of biological role, plays a role in late gene expression. The chain is Protein AC41 (AC41) from Autographa californica nuclear polyhedrosis virus (AcMNPV).